A 212-amino-acid chain; its full sequence is Tetraspanin-31-B (212 aa).

The Cytoplasmic segment spans residues 1–12; it reads MVCGGFTCSKNA. The chain crosses the membrane as a helical span at residues 13-33; that stretch reads LCALNVVYMLVGVLLIIVAAW. The Extracellular segment spans residues 34–44; it reads GKGFGIVSSIH. The chain crosses the membrane as a helical span at residues 45–65; it reads IIGGVIAIGVFLLLIAIIGLI. The Cytoplasmic segment spans residues 66 to 72; sequence GAVSHHQ. Residues 73-93 traverse the membrane as a helical segment; it reads VMLFIYMVVLILVFIFQFIVS. Over 94-175 the chain is Extracellular; sequence CSCLAMNRSQ…MLNHADEALK (82 aa). Residues N100, N109, N117, and N134 are each glycosylated (N-linked (GlcNAc...) asparagine). The helical transmembrane segment at 176–196 threads the bilayer; sequence ILGGVGLFFSFTEILGVWLAF. Topologically, residues 197–212 are cytoplasmic; the sequence is RYRNQKDPRANPSAFL.

This sequence belongs to the tetraspanin (TM4SF) family.

The protein resides in the membrane. This is Tetraspanin-31-B (tspan31-b) from Xenopus laevis (African clawed frog).